A 1477-amino-acid chain; its full sequence is Neuralized-like protein 4 (1477 aa).

Disordered stretches follow at residues 1-26 (MAELHPRTGKLISLSNGNRTAARKQP) and 168-196 (QPPPEEEEEEDAEEQEGSLVPLGQSRPDK). Residues 1-167 (MAELHPRTGK…KCTQITVLSC (167 aa)) form the NHR 1 domain. The span at 171–183 (PEEEEEEDAEEQE) shows a compositional bias: acidic residues. NHR domains lie at 250–417 (ALLF…IVHN), 450–616 (QLLF…IMDE), 645–813 (DLRF…LTGG), and 841–1010 (SHRF…TVSS). Residues 1012–1041 (LLEEPDATKPPSITSESEEEEDPADHGDPH) form a disordered region. One can recognise an NHR 6 domain in the interval 1048-1211 (SLQFLANHGK…QCEQVSIVTG (164 aa)).

Ubiquitinated. This ubiquitination leads to proteasomal degradation.

The protein localises to the cytoplasm. It is found in the cytoskeleton. It localises to the microtubule organizing center. The protein resides in the centrosome. Its subcellular location is the centriole. Functionally, promotes CCP110 ubiquitination and proteasome-dependent degradation. By counteracting accumulation of CP110, maintains normal centriolar homeostasis and preventing formation of ectopic microtubular organizing centers. This Xenopus tropicalis (Western clawed frog) protein is Neuralized-like protein 4 (neurl4).